Reading from the N-terminus, the 465-residue chain is ATP synthase subunit beta (465 aa).

151-158 (GGAGVGKT) serves as a coordination point for ATP.

Belongs to the ATPase alpha/beta chains family. In terms of assembly, F-type ATPases have 2 components, CF(1) - the catalytic core - and CF(0) - the membrane proton channel. CF(1) has five subunits: alpha(3), beta(3), gamma(1), delta(1), epsilon(1). CF(0) has four main subunits: a(1), b(1), b'(1) and c(9-12).

It is found in the cell inner membrane. The catalysed reaction is ATP + H2O + 4 H(+)(in) = ADP + phosphate + 5 H(+)(out). Produces ATP from ADP in the presence of a proton gradient across the membrane. The catalytic sites are hosted primarily by the beta subunits. The chain is ATP synthase subunit beta from Chloroherpeton thalassium (strain ATCC 35110 / GB-78).